A 125-amino-acid chain; its full sequence is Succinate dehydrogenase assembly factor 3, mitochondrial (125 aa).

Residues 1 to 42 (MRTTNHLYRTVHRQGKPLLPPLHLYRRILRAHRTFPPAQRAL) constitute a mitochondrion transit peptide.

Belongs to the complex I LYR family. SDHAF3 subfamily. Interacts with the iron-sulfur protein subunit within the SDH catalytic dimer.

The protein resides in the mitochondrion matrix. Plays an essential role in the assembly of succinate dehydrogenase (SDH), an enzyme complex (also referred to as respiratory complex II) that is a component of both the tricarboxylic acid (TCA) cycle and the mitochondrial electron transport chain, and which couples the oxidation of succinate to fumarate with the reduction of ubiquinone (coenzyme Q) to ubiquinol. Promotes maturation of the iron-sulfur protein subunit of the SDH catalytic dimer, protecting it from the deleterious effects of oxidants. May act together with SDHAF1. The sequence is that of Succinate dehydrogenase assembly factor 3, mitochondrial from Eremothecium gossypii (strain ATCC 10895 / CBS 109.51 / FGSC 9923 / NRRL Y-1056) (Yeast).